A 575-amino-acid polypeptide reads, in one-letter code: Interleukin-1 receptor-like 2 (575 aa).

A signal peptide spans 1–19; it reads MWSLLLCGLSIALPLSVTA. 3 Ig-like C2-type domains span residues 20–111, 126–211, and 222–318; these read DGCK…VNLT, PNLS…VLNG, and YGGS…MCHA. The Extracellular segment spans residues 20-335; that stretch reads DGCKDIFMKN…ILQLPAPDFR (316 aa). Residues Asn41, Asn59, Asn109, Asn127, Asn184, Asn234, Asn250, Asn266, and Asn299 are each glycosylated (N-linked (GlcNAc...) asparagine). Residues Cys42 and Cys95 are joined by a disulfide bond. A disulfide bond links Cys146 and Cys195. Cys249 and Cys316 are disulfide-bonded. A helical membrane pass occupies residues 336–356; that stretch reads AYLIGGLIALVAVAVSVVYIY. Residues 357–575 lie on the Cytoplasmic side of the membrane; the sequence is NIFKIDIVLW…RRKKCTLTTG (219 aa). In terms of domain architecture, TIR spans 381–536; that stretch reads KLYDAYVLYP…KFWKTVRYHM (156 aa). Residue Glu467 is part of the active site.

The protein belongs to the interleukin-1 receptor family. Interacts with IL1RAP; the association is enhanced by IL36B indicative for an functional signaling complex and inhibited by IL36RN. As to expression, expressed in synovial fibroblasts and articular chondrocytes. Expressed in keratinocytes and monocyte-derived dendritic cells. Expressed in monocytes and myeloid dendritic cells; at protein level.

The protein localises to the membrane. It carries out the reaction NAD(+) + H2O = ADP-D-ribose + nicotinamide + H(+). In terms of biological role, receptor for interleukin-36 (IL36A, IL36B and IL36G). After binding to interleukin-36 associates with the coreceptor IL1RAP to form the interleukin-36 receptor complex which mediates interleukin-36-dependent activation of NF-kappa-B, MAPK and other pathways. The IL-36 signaling system is thought to be present in epithelial barriers and to take part in local inflammatory response; it is similar to the IL-1 system. Seems to be involved in skin inflammatory response by induction of the IL-23/IL-17/IL-22 pathway. This Homo sapiens (Human) protein is Interleukin-1 receptor-like 2 (IL1RL2).